The primary structure comprises 862 residues: uncharacterized protein (862 aa).

Positions 1 to 25 are cleaved as a signal peptide; that stretch reads MKPRPYSVFLFLHIVFYSLLSAVNG. Over 26 to 61 the chain is Lumenal; it reads SPSLDYFETCSNFVPRAGIPTFSPYAVIKNFDEVNR. The helical transmembrane segment at 62-82 threads the bilayer; the sequence is MYYIQVVGNLSGVITIVGGNG. At 83-187 the chain is on the cytoplasmic side; sequence SHIHAASVYS…STTLYYFYPV (105 aa). A helical transmembrane segment spans residues 188–208; that stretch reads ISYLVVVSLAYVSFSIIYALF. Over 209–230 the chain is Lumenal; the sequence is LNPWTGSLDPFKSIFNFNMDPD. The helical transmembrane segment at 231–250 threads the bilayer; it reads ALRLTSLGFFDFVQYLQFAV. Residues 251–256 lie on the Cytoplasmic side of the membrane; sequence STAQVS. Residues 257 to 277 traverse the membrane as a helical segment; that stretch reads VMFPKFYINIMAALSWGTALF. Topologically, residues 278–329 are lumenal; it reads RFPIFSEPAEYQFADFADLSVASSSYADYLPKSYGMYSFLDSIGIGTACWLP. A helical transmembrane segment spans residues 330–350; the sequence is FLIVMVIYLFAALFVALLVIF. At 351–372 the chain is on the cytoplasmic side; sequence LKWLMSRIFNETIAETRWDTWS. A helical transmembrane segment spans residues 373–393; that stretch reads FIAGSLIRLYFLTYFPTVAYM. Topologically, residues 394–404 are lumenal; it reads SFQFVAPPTGY. Residues 405–425 form a helical membrane-spanning segment; sequence EIIPVLWFIFFGIFIPVYLYM. At 426-457 the chain is on the cytoplasmic side; the sequence is NLAFVEPSSKLLEDQTYLHLFGSIYNSFREER. The helical transmembrane segment at 458–480 threads the bilayer; the sequence is VMFWIFPIAVQFMRGITVGVIGS. At 481 to 483 the chain is on the lumenal side; that stretch reads SGS. A helical membrane pass occupies residues 484 to 503; the sequence is AQLAIFFILEVANVVAYAYV. Residues 504–514 are Cytoplasmic-facing; it reads RPHFPQTSMNT. A helical membrane pass occupies residues 515 to 535; the sequence is LNTFISTMRLITVILMIPLDP. Residues 536–545 are Lumenal-facing; the sequence is RLKVLGISRD. Residues 546–566 traverse the membrane as a helical segment; sequence LLAYAILFIHIMVCILFLLLS. Topologically, residues 567 to 862 are cytoplasmic; the sequence is TQRFMEVSAR…AESAWSIPHP (296 aa). The segment covering 668–686 has biased composition (polar residues); sequence QASSLVPSKNNTASSSSLM. Disordered regions lie at residues 668–717 and 815–862; these read QASS…SVRK and VLRS…IPHP. The segment covering 689–700 has biased composition (low complexity); that stretch reads SPVTPSSPYSTS. Positions 834–850 are enriched in basic and acidic residues; that stretch reads EPSRDEQYSMERKKTDD.

It belongs to the transient receptor potential (TRP) ion channel family.

The protein localises to the cytoplasm. It is found in the golgi apparatus membrane. This is an uncharacterized protein from Schizosaccharomyces pombe (strain 972 / ATCC 24843) (Fission yeast).